A 1050-amino-acid polypeptide reads, in one-letter code: Ankyrin repeat domain-containing protein 27 (1050 aa).

The segment at 1–372 (MALYDEDLLK…RQGSLSAKPP (372 aa)) is sufficient for GEF activity towards RAB21. Residues 233-371 (ASEDAAFNKI…IRQGSLSAKP (139 aa)) enclose the VPS9 domain. ANK repeat units follow at residues 396-426 (SPTDCLFKHIASGNQKEVERLLSQEDHDKDT), 462-491 (RGHTPLHVAAVCGQASLIDLLVSKGAMVNA), 495-524 (HGATPLHLACQKGYQSVTLLLLHYKASAEV), 528-560 (NGNTPLHLACTYGHEDCVKALVYYDVESCRLDI), 564-593 (KGDTPLHIAARWGYQGVIETLLQNGASTEI), and 597-627 (LKETPLKCALNSKILSVMEAYHLSFERRQKS). The interval 396–460 (SPTDCLFKHI…PSVVTPFSRD (65 aa)) is sufficient for interaction with VPS29. The interaction with RAB38 stretch occupies residues 451-600 (PSVVTPFSRD…TEIQNRLKET (150 aa)). The interaction with RAB32 stretch occupies residues 451 to 730 (PSVVTPFSRD…APAQKRLAKV (280 aa)). The tract at residues 625–665 (QKSSEAPVQSPQRSVDSISQESSTSSFSSMSASSRQEETKK) is disordered. Residues 628-637 (SEAPVQSPQR) show a composition bias toward polar residues. Low complexity predominate over residues 638–658 (SVDSISQESSTSSFSSMSASS). Residues 658–707 (SRQEETKKDYREVEKLLRAVADGDLEMVRYLLEWTEEDLEDAEDTVSAAD) form a required for interaction with VAMP7 region. 5 ANK repeats span residues 668–698 (REVEKLLRAVADGDLEMVRYLLEWTEEDLED), 743–772 (DGSSPLHVAALHGRADLIPLLLKHGANAGA), 776–805 (DQAVPLHLACQQGHFQVVKCLLDSNAKPNK), 809–838 (SGNTPLIYACSGGHHELVALLLQHGASINA), and 842–871 (KGNTALHEAVIEKHVFVVELLLLHGASVQV). Positions 692 to 746 (TEEDLEDAEDTVSAADPEFCHPLCQCPKCAPAQKRLAKVPASGLGVNVTSQDGSS) are sufficient for interaction with VPS29. Phosphoserine is present on residues Ser-962 and Ser-970. The segment at 987–1050 (PAQSGSHAAE…TPQEVSASRS (64 aa)) is disordered. The segment covering 994–1004 (AAEKGNSDWPE) has biased composition (basic and acidic residues). The residue at position 1023 (Thr-1023) is a Phosphothreonine. Over residues 1040-1050 (STPQEVSASRS) the composition is skewed to polar residues.

As to quaternary structure, interacts with RAB21 (GDP-bound form), VPS29, RAB32 (GTP-bound form), RAB38 (GTP-bound form), VAMP7, KIF5A, KIF5C, GOLGA4. Interacts with low affinity with RAB5. ANKRD27:RAB32 heterodimers can homodimerize to form tetramers. Can interact with RAB38 or RAB32, VPS29 and VAMP7 simultaneously. A decreased interaction with RAB32 seen in the presence of SGSM2.

Its subcellular location is the early endosome. The protein localises to the late endosome. It localises to the cytoplasmic vesicle membrane. It is found in the lysosome. The protein resides in the cell membrane. Its subcellular location is the melanosome. May be a guanine exchange factor (GEF) for Rab21, Rab32 and Rab38 and regulate endosome dynamics. May regulate the participation of VAMP7 in membrane fusion events; in vitro inhibits VAMP7-mediated SNARE complex formation by trapping VAMP7 in a closed, fusogenically inactive conformation. Involved in peripheral melanosomal distribution of TYRP1 in melanocytes; the function, which probably is implicating vesicle-trafficking, includes cooperation with Rab32, Rab38 and VAMP7. Involved in the regulation of neurite growth; the function seems to require its GEF activity, probably towards Rab21, and VAMP7 but not Rab32/38. Proposed to be involved in Golgi sorting of VAMP7 and transport of VAMP7 vesicles to the cell surface; the function seems to implicate kinesin heavy chain isoform 5 proteins, GOLGA4, RAB21 and MACF1. Required for the colocalization of VAMP7 and Rab21, probably on TGN sites. Involved in GLUT1 endosome-to-plasma membrane trafficking; the function is dependent of association with VPS29. Regulates the proper trafficking of melanogenic enzymes TYR, TYRP1 and DCT/TYRP2 to melanosomes in melanocytes. The chain is Ankyrin repeat domain-containing protein 27 (ANKRD27) from Homo sapiens (Human).